The sequence spans 947 residues: Bifunctional glutamine synthetase adenylyltransferase/adenylyl-removing enzyme (947 aa).

An adenylyl removase region spans residues 1–440 (MTPLSSPLSQ…VFNELIGDDE (440 aa)). Positions 450–947 (SEPWRDVWQD…ASWRKWLVAV (498 aa)) are adenylyl transferase.

It belongs to the GlnE family. The cofactor is Mg(2+).

It catalyses the reaction [glutamine synthetase]-O(4)-(5'-adenylyl)-L-tyrosine + phosphate = [glutamine synthetase]-L-tyrosine + ADP. It carries out the reaction [glutamine synthetase]-L-tyrosine + ATP = [glutamine synthetase]-O(4)-(5'-adenylyl)-L-tyrosine + diphosphate. Its function is as follows. Involved in the regulation of glutamine synthetase GlnA, a key enzyme in the process to assimilate ammonia. When cellular nitrogen levels are high, the C-terminal adenylyl transferase (AT) inactivates GlnA by covalent transfer of an adenylyl group from ATP to specific tyrosine residue of GlnA, thus reducing its activity. Conversely, when nitrogen levels are low, the N-terminal adenylyl removase (AR) activates GlnA by removing the adenylyl group by phosphorolysis, increasing its activity. The regulatory region of GlnE binds the signal transduction protein PII (GlnB) which indicates the nitrogen status of the cell. The polypeptide is Bifunctional glutamine synthetase adenylyltransferase/adenylyl-removing enzyme (Salmonella dublin (strain CT_02021853)).